The chain runs to 392 residues: Chorismate synthase (392 aa).

NADP(+) is bound by residues R39 and R45. FMN contacts are provided by residues 128-130, 248-249, G300, 315-319, and R341; these read RSS, QA, and KPIPT.

The protein belongs to the chorismate synthase family. As to quaternary structure, homotetramer. It depends on FMNH2 as a cofactor.

The catalysed reaction is 5-O-(1-carboxyvinyl)-3-phosphoshikimate = chorismate + phosphate. The protein operates within metabolic intermediate biosynthesis; chorismate biosynthesis; chorismate from D-erythrose 4-phosphate and phosphoenolpyruvate: step 7/7. Its function is as follows. Catalyzes the anti-1,4-elimination of the C-3 phosphate and the C-6 proR hydrogen from 5-enolpyruvylshikimate-3-phosphate (EPSP) to yield chorismate, which is the branch point compound that serves as the starting substrate for the three terminal pathways of aromatic amino acid biosynthesis. This reaction introduces a second double bond into the aromatic ring system. This is Chorismate synthase from Trichlorobacter lovleyi (strain ATCC BAA-1151 / DSM 17278 / SZ) (Geobacter lovleyi).